We begin with the raw amino-acid sequence, 277 residues long: Large ribosomal subunit protein uL2c (277 aa).

Residues Val223–Ser277 are disordered.

This sequence belongs to the universal ribosomal protein uL2 family. Part of the 50S ribosomal subunit.

It localises to the plastid. The protein resides in the chloroplast. The chain is Large ribosomal subunit protein uL2c (rpl2) from Marchantia polymorpha (Common liverwort).